A 130-amino-acid polypeptide reads, in one-letter code: Astrocytic phosphoprotein PEA-15 (130 aa).

A DED domain is found at 3 to 81 (EYGTLLQDLT…RPDLLTMVVD (79 aa)). Phosphoserine occurs at positions 61 and 90. A microtubule-binding region spans residues 98 to 107 (KLTRIPSAKK). S104 carries the phosphoserine; by PKC modification. S116 carries the post-translational modification Phosphoserine; by CaMK2. The microtubule-binding stretch occupies residues 122-129 (KLAPPPKK).

Binds RPS6KA3, MAPK3 and MAPK1. Interacts with CASP8 and FADD. Transient interaction with PLD1 and PLD2. Post-translationally, phosphorylated by protein kinase C and calcium-calmodulin-dependent protein kinase. These phosphorylation events are modulated by neurotransmitters or hormones. In terms of tissue distribution, predominantly expressed in the brain. Low levels in some peripheral organs.

It localises to the cytoplasm. Blocks Ras-mediated inhibition of integrin activation and modulates the ERK MAP kinase cascade. Inhibits RPS6KA3 activities by retaining it in the cytoplasm. Inhibits both TNFRSF6- and TNFRSF1A-mediated CASP8 activity and apoptosis. Regulates glucose transport by controlling both the content of SLC2A1 glucose transporters on the plasma membrane and the insulin-dependent trafficking of SLC2A4 from the cell interior to the surface. This Mus musculus (Mouse) protein is Astrocytic phosphoprotein PEA-15 (Pea15).